A 606-amino-acid chain; its full sequence is Pyruvate decarboxylase 2 (606 aa).

Substrate-binding residues include Asp68 and His155. Residues Asp433–Ile515 are thiamine pyrophosphate binding. Mg(2+) is bound by residues Asp483, Asn510, and Gly512. Glu516 is a substrate binding site.

This sequence belongs to the TPP enzyme family. Homotetramer. The cofactor is a metal cation. It depends on thiamine diphosphate as a cofactor.

The enzyme catalyses a 2-oxocarboxylate + H(+) = an aldehyde + CO2. This chain is Pyruvate decarboxylase 2 (PDC2), found in Oryza sativa subsp. indica (Rice).